Reading from the N-terminus, the 860-residue chain is MRFTLIEAVALTAVSLASADELAYSPPYYPSPWANGQGDWAQAYQRAVDIVSQMTLAEKVNLTTGTGWELELCVGQTGGVPRLGVPGMCLQDSPLGVRDSDYNSAFPSGMNVAATWDKNLAYLRGKAMGQEFSDKGADIQLGPAAGPLGRSPDGGRNWEGFSPDPALSGVLFAETIKGIQDAGVVATAKHYIAYEQEHFRQAPEAQGYGFNISESGSANLDDKTMHELYLWPFADAIRAGAGAVMCSYNQINNSYGCQNSYTLNKLLKAELGFQGFVMSDWAAHHAGVSGALAGLDMSMPGDVDYDSGTSYWGTNLTVSVLNGTVPQWRVDDMAVRIMAAYYKVGRDRLWTPPNFSSWTRDEYGYKYYYVSEGPYEKVNHYVNVQRNHSELIRRIGADSTVLLKNDGALPLTGKERLVALIGEDAGSNPYGANGCSDRGCDNGTLAMGWGSGTANFPYLVTPEQAISNEVLKNKNGVFTATDNWAIDQIEALAKTASVSLVFVNADSGEGYINVDGNLGDRRNLTLWRNGDNVIKAAASNCNNTIVIIHSVGPVLVNEWYDNPNVTAILWGGLPGQESGNSLADVLYGRVNPGAKSPFTWGKTREAYQDYLVTEPNNGNGAPQEDFVEGVFIDYRGFDKRNETPIYEFGYGLSYTTFNYSNLEVQVLSAPAYEPASGETEAAPTFGEVGNASNYLYPDGLQKITKFIYPWLNSTDLEASSGDASYGQDSSDYLPEGATDGSAQPILPAGGGPGGNPRLYDELIRVSVTIKNTGKVAGDEVPQLYVSLGGPNEPKIVLRQFERITLQPSEETKWSTTLTRRDLANWNVEKQDWEITSYPKMVFVGSSSRKLPLRASLPTVH.

Positions Met1 to Ala19 are cleaved as a signal peptide. Residues Asn61, Asn211, and Asn252 are each glycosylated (N-linked (GlcNAc...) asparagine). The active site involves Asp280. N-linked (GlcNAc...) asparagine glycans are attached at residues Asn315, Asn322, Asn354, Asn387, Asn442, Asn523, Asn542, Asn564, Asn658, Asn690, and Asn712. Residues Ser719 to Gly753 form a disordered region.

Belongs to the glycosyl hydrolase 3 family.

The protein resides in the secreted. It catalyses the reaction Hydrolysis of terminal, non-reducing beta-D-glucosyl residues with release of beta-D-glucose.. The protein operates within glycan metabolism; cellulose degradation. In terms of biological role, beta-glucosidases are one of a number of cellulolytic enzymes involved in the degradation of cellulosic biomass. Catalyzes the last step releasing glucose from the inhibitory cellobiose. The protein is Beta-glucosidase A (bglA) of Aspergillus kawachii (strain NBRC 4308) (White koji mold).